The chain runs to 495 residues: Phosphomethylpyrimidine synthase (495 aa).

Substrate is bound by residues Asn125, Met154, Tyr183, His219, 239–241 (SRG), 280–283 (DGLR), and Glu319. A Zn(2+)-binding site is contributed by His323. Tyr346 is a substrate binding site. His387 serves as a coordination point for Zn(2+). Positions 467, 470, and 475 each coordinate [4Fe-4S] cluster.

The protein belongs to the ThiC family. [4Fe-4S] cluster is required as a cofactor.

The catalysed reaction is 5-amino-1-(5-phospho-beta-D-ribosyl)imidazole + S-adenosyl-L-methionine = 4-amino-2-methyl-5-(phosphooxymethyl)pyrimidine + CO + 5'-deoxyadenosine + formate + L-methionine + 3 H(+). It participates in cofactor biosynthesis; thiamine diphosphate biosynthesis. Catalyzes the synthesis of the hydroxymethylpyrimidine phosphate (HMP-P) moiety of thiamine from aminoimidazole ribotide (AIR) in a radical S-adenosyl-L-methionine (SAM)-dependent reaction. In Leptospira interrogans serogroup Icterohaemorrhagiae serovar copenhageni (strain Fiocruz L1-130), this protein is Phosphomethylpyrimidine synthase.